The chain runs to 351 residues: uncharacterized protein (351 aa).

One can recognise an HTH lacI-type domain in the interval 14–69 (PRLADIAAQAQVSEATASRVLNGRPASRXSTRQRVLAALDLLGYERPTRLRRRSAG). Residues 16–35 (LADIAAQAQVSEATASRVLN) constitute a DNA-binding region (H-T-H motif).

In terms of biological role, putative sugar-binding regulatory protein for the alpha-amylase gene. This is an uncharacterized protein from Streptomyces limosus (Streptomyces albidoflavus).